The primary structure comprises 124 residues: Small ribosomal subunit protein uS12 (124 aa).

The residue at position 89 (Asp89) is a 3-methylthioaspartic acid.

Belongs to the universal ribosomal protein uS12 family. As to quaternary structure, part of the 30S ribosomal subunit. Contacts proteins S8 and S17. May interact with IF1 in the 30S initiation complex.

Its function is as follows. With S4 and S5 plays an important role in translational accuracy. Functionally, interacts with and stabilizes bases of the 16S rRNA that are involved in tRNA selection in the A site and with the mRNA backbone. Located at the interface of the 30S and 50S subunits, it traverses the body of the 30S subunit contacting proteins on the other side and probably holding the rRNA structure together. The combined cluster of proteins S8, S12 and S17 appears to hold together the shoulder and platform of the 30S subunit. This is Small ribosomal subunit protein uS12 from Blochmanniella pennsylvanica (strain BPEN).